Reading from the N-terminus, the 141-residue chain is Large ribosomal subunit protein uL11 (141 aa).

It belongs to the universal ribosomal protein uL11 family. As to quaternary structure, part of the ribosomal stalk of the 50S ribosomal subunit. Interacts with L10 and the large rRNA to form the base of the stalk. L10 forms an elongated spine to which L12 dimers bind in a sequential fashion forming a multimeric L10(L12)X complex. Post-translationally, one or more lysine residues are methylated.

Its function is as follows. Forms part of the ribosomal stalk which helps the ribosome interact with GTP-bound translation factors. The protein is Large ribosomal subunit protein uL11 of Synechococcus sp. (strain CC9311).